The sequence spans 476 residues: Protein transport protein Sec61 subunit alpha (476 aa).

Topologically, residues 2–33 (GIKFLEVIKPFCAVLPEIQKPERKIQFREKVL) are cytoplasmic. Residues 34–53 (WTAITLFIFLVCCQIPLFGI) traverse the membrane as a helical segment. The Lumenal segment spans residues 54–76 (MSSDSADPFYWMRVILASNRGTL). A helical membrane pass occupies residues 77–96 (MELGISPIVTSGLIMQLLAG). The Cytoplasmic portion of the chain corresponds to 97-117 (AKIIEVGDTPKDRALFNGAQK). A helical membrane pass occupies residues 118–138 (LFGMIITIGQAIVYVMTGMYG). The Lumenal portion of the chain corresponds to 139 to 144 (DPSEMG). The chain crosses the membrane as a helical span at residues 145 to 165 (AGICLVIIIQLFVAGLIVLLL). Over 166–172 (DELLQKG) the chain is Cytoplasmic. The chain crosses the membrane as a helical span at residues 173 to 193 (YGLGSGISLFIATNICETIVW). Topologically, residues 194–240 (KAFSPTTVNTGRGTEFEGAIIALFHLLATRTDKVRALREAFYRQNLP) are lumenal. Residues 241-261 (NLMNLIATVFVFAVVIYFQGF) form a helical membrane-spanning segment. The Cytoplasmic portion of the chain corresponds to 262 to 288 (RVDLPIKSARYRGQYNTYPIKLFYTSN). The helical transmembrane segment at 289-309 (IPIILQSALVSNLYVISQMLS) threads the bilayer. The Lumenal segment spans residues 310–354 (TRFSGNFLVNLLGTWSDTSTGGPARAYPVGGLCYYFSPPESFGSV). A helical transmembrane segment spans residues 355 to 375 (LDDPVHASIYIVFMLGSCAFF). Residues 376–420 (SKTWIEVSGSSAKDVAKQLKEQQMVMRGHRETSMVHELNRYIPTA) are Cytoplasmic-facing. Residues 421 to 441 (AAFGGLCIGGLSVMADFLGAI) form a helical membrane-spanning segment. Residues 442-445 (GSGT) lie on the Lumenal side of the membrane. The chain crosses the membrane as a helical span at residues 446–462 (GILLAVTIIYQYFEIFV). The Cytoplasmic segment spans residues 463-476 (KEQSEMGSMGALLF).

It belongs to the SecY/SEC61-alpha family. The SEC61 channel-forming translocon complex consists of channel-forming core components SEC61A1, SEC61B and SEC61G and different auxiliary components such as SEC62 and SEC63. The SEC61 channel associates with the multi-pass translocon (MPT) complex.

The protein resides in the endoplasmic reticulum membrane. Component of SEC61 channel-forming translocon complex that mediates transport of signal peptide-containing precursor polypeptides across the endoplasmic reticulum (ER). Forms a ribosome receptor and a gated pore in the ER membrane, both functions required for cotranslational translocation of nascent polypeptides. May cooperate with auxiliary protein SEC62, SEC63 and HSPA5/BiP to enable post-translational transport of small presecretory proteins. The SEC61 channel is also involved in ER membrane insertion of transmembrane proteins: it mediates membrane insertion of the first few transmembrane segments of proteins, while insertion of subsequent transmembrane regions of multi-pass membrane proteins is mediated by the multi-pass translocon (MPT) complex. The sequence is that of Protein transport protein Sec61 subunit alpha (sec61a) from Gadus ogac (Greenland cod).